We begin with the raw amino-acid sequence, 380 residues long: PqqA peptide cyclase (380 aa).

Residues 12–228 (FGIPLAVLLE…EEARERLKGR (217 aa)) enclose the Radical SAM core domain. C26, C30, and C33 together coordinate [4Fe-4S] cluster.

Belongs to the radical SAM superfamily. PqqE family. In terms of assembly, interacts with PqqD. The interaction is necessary for activity of PqqE. The cofactor is [4Fe-4S] cluster.

The enzyme catalyses [PQQ precursor protein] + S-adenosyl-L-methionine = E-Y cross-linked-[PQQ precursor protein] + 5'-deoxyadenosine + L-methionine + H(+). It participates in cofactor biosynthesis; pyrroloquinoline quinone biosynthesis. Catalyzes the cross-linking of a glutamate residue and a tyrosine residue in the PqqA protein as part of the biosynthesis of pyrroloquinoline quinone (PQQ). This Bradyrhizobium diazoefficiens (strain JCM 10833 / BCRC 13528 / IAM 13628 / NBRC 14792 / USDA 110) protein is PqqA peptide cyclase.